A 573-amino-acid chain; its full sequence is Proton-coupled zinc antiporter SLC30A9, mitochondrial (573 aa).

The disordered stretch occupies residues 66 to 108 (NCSTSGSGKDGSPTRPEEPKTTEKAQAAQPAAKGAGSKPQGLT). Over residues 90–104 (AQAAQPAAKGAGSKP) the composition is skewed to low complexity. Helical transmembrane passes span 244-264 (VVMVAICINGLNFFFKLLAWV), 319-339 (GVGIFMMGAGLSWYHGIMGLL), 347-367 (LLWAYCILAGSLVSEGATLLV), 397-417 (VVLLEDAAAVLGVVLAAGCMG), and 429-449 (SLGSLGVGTLLGTVSAFLIYT). An LXXLL motif motif is present at residues 467 to 471 (LTEFL).

Belongs to the cation diffusion facilitator (CDF) transporter (TC 2.A.4) family. SLC30A subfamily.

It is found in the mitochondrion membrane. Its subcellular location is the nucleus. The protein resides in the endoplasmic reticulum. The enzyme catalyses Zn(2+)(in) + 2 H(+)(out) = Zn(2+)(out) + 2 H(+)(in). In terms of biological role, mitochondrial proton-coupled zinc ion antiporter mediating the export of zinc from the mitochondria and involved in zinc homeostasis, zinc mobilization as well as mitochondrial morphology and health. In nucleus, may function as a secondary coactivator for nuclear receptors. This Danio rerio (Zebrafish) protein is Proton-coupled zinc antiporter SLC30A9, mitochondrial (slc30a9).